Consider the following 274-residue polypeptide: NADPH-dependent 7-cyano-7-deazaguanine reductase (274 aa).

80-82 (VES) provides a ligand contact to substrate. An NADPH-binding site is contributed by 82–83 (SK). Cys181 acts as the Thioimide intermediate in catalysis. Residue Asp188 is the Proton donor of the active site. 220-221 (HE) serves as a coordination point for substrate. 249-250 (RG) serves as a coordination point for NADPH.

The protein belongs to the GTP cyclohydrolase I family. QueF type 2 subfamily. Homodimer.

It localises to the cytoplasm. It catalyses the reaction 7-aminomethyl-7-carbaguanine + 2 NADP(+) = 7-cyano-7-deazaguanine + 2 NADPH + 3 H(+). It functions in the pathway tRNA modification; tRNA-queuosine biosynthesis. Catalyzes the NADPH-dependent reduction of 7-cyano-7-deazaguanine (preQ0) to 7-aminomethyl-7-deazaguanine (preQ1). The chain is NADPH-dependent 7-cyano-7-deazaguanine reductase from Paraburkholderia phymatum (strain DSM 17167 / CIP 108236 / LMG 21445 / STM815) (Burkholderia phymatum).